A 435-amino-acid polypeptide reads, in one-letter code: Trigger factor (435 aa).

The 86-residue stretch at 162 to 247 folds into the PPIase FKBP-type domain; the sequence is GDRVIIDFKG…VKNVAEATLP (86 aa).

It belongs to the FKBP-type PPIase family. Tig subfamily.

It is found in the cytoplasm. The catalysed reaction is [protein]-peptidylproline (omega=180) = [protein]-peptidylproline (omega=0). Involved in protein export. Acts as a chaperone by maintaining the newly synthesized protein in an open conformation. Functions as a peptidyl-prolyl cis-trans isomerase. The polypeptide is Trigger factor (Chromobacterium violaceum (strain ATCC 12472 / DSM 30191 / JCM 1249 / CCUG 213 / NBRC 12614 / NCIMB 9131 / NCTC 9757 / MK)).